Consider the following 149-residue polypeptide: Histidine-containing phosphotransfer protein 2 (149 aa).

The region spanning 39 to 144 (TPGFVSEVVT…LQLEQQIQAY (106 aa)) is the HPt domain. His-80 carries the phosphohistidine modification.

In terms of processing, two-component system major event consists of a His-to-Asp phosphorelay between a sensor histidine kinase (HK) and a response regulator (RR). In plants, the His-to-Asp phosphorelay involves an additional intermediate named Histidine-containing phosphotransfer protein (HPt). This multistep phosphorelay consists of a His-Asp-His-Asp sequential transfer of a phosphate group between first a His and an Asp of the HK protein, followed by the transfer to a conserved His of the HPt protein and finally the transfer to an Asp in the receiver domain of the RR protein. In terms of tissue distribution, widely expressed.

The protein localises to the cytoplasm. It is found in the cytosol. It localises to the nucleus. Functions as a two-component phosphorelay mediators between cytokinin sensor histidine kinases and response regulators (B-type ARRs). Plays an important role in propagating cytokinin signal transduction through the multistep His-to-Asp phosphorelay. Functions as a positive regulator of the cytokinin signaling pathway. May play a regulatory role in salt and drought tolerance during plant development. In Oryza sativa subsp. japonica (Rice), this protein is Histidine-containing phosphotransfer protein 2.